The chain runs to 631 residues: ATP-dependent RNA helicase mrh4, mitochondrial (631 aa).

Residues 1-39 (MYPLGRVSLPVRSPVCLFCQNRTSSLLPSAYVWQSARTM) constitute a mitochondrion transit peptide. Residues 55–111 (PNVAKTSLKKKRNDTDRFGPFAGMNQTEARIRDDPRSRSPASLKRSKAPSDESGRKD) are disordered. The span at 102-111 (APSDESGRKD) shows a compositional bias: basic and acidic residues. Residues 143–176 (TSFDQFPLLPVVRHSIFSQALPGLHDVTPTPIQR) carry the Q motif motif. Positions 181 to 200 (RLLDDTNKDKKPKKRAEGEP) are disordered. In terms of domain architecture, Helicase ATP-binding spans 196-408 (AEGEPEYDQY…RKKYPDIQRL (213 aa)). An ATP-binding site is contributed by 209 to 216 (AETGSGKT). The short motif at 355 to 358 (DEAD) is the DEAD box element. The Helicase C-terminal domain maps to 442 to 631 (DVIWSIGKAG…EGMFRGQALI (190 aa)).

This sequence belongs to the DEAD box helicase family. MRH4 subfamily.

It localises to the mitochondrion. The enzyme catalyses ATP + H2O = ADP + phosphate + H(+). ATP-binding RNA helicase involved in mitochondrial RNA metabolism. Required for maintenance of mitochondrial DNA. The chain is ATP-dependent RNA helicase mrh4, mitochondrial (mrh4) from Aspergillus terreus (strain NIH 2624 / FGSC A1156).